A 351-amino-acid polypeptide reads, in one-letter code: Uroporphyrinogen decarboxylase (351 aa).

Residues 25 to 29, aspartate 74, tyrosine 151, serine 206, and histidine 325 contribute to the substrate site; that span reads RQAGR.

Belongs to the uroporphyrinogen decarboxylase family. In terms of assembly, homodimer.

The protein localises to the cytoplasm. The catalysed reaction is uroporphyrinogen III + 4 H(+) = coproporphyrinogen III + 4 CO2. It participates in porphyrin-containing compound metabolism; protoporphyrin-IX biosynthesis; coproporphyrinogen-III from 5-aminolevulinate: step 4/4. Catalyzes the decarboxylation of four acetate groups of uroporphyrinogen-III to yield coproporphyrinogen-III. The chain is Uroporphyrinogen decarboxylase from Prosthecochloris aestuarii (strain DSM 271 / SK 413).